The following is an 83-amino-acid chain: NAD(P)H-quinone oxidoreductase subunit L, organellar chromatophore (83 aa).

A run of 2 helical transmembrane segments spans residues 17–37 (LLLAYGVLGGLYLILVPLALY) and 53–73 (LFVYGLVFLFFPGLILLSPFL).

The protein belongs to the complex I NdhL subunit family. As to quaternary structure, NDH-1 can be composed of about 15 different subunits; different subcomplexes with different compositions have been identified which probably have different functions.

Its subcellular location is the plastid. The protein localises to the organellar chromatophore thylakoid membrane. The enzyme catalyses a plastoquinone + NADH + (n+1) H(+)(in) = a plastoquinol + NAD(+) + n H(+)(out). It carries out the reaction a plastoquinone + NADPH + (n+1) H(+)(in) = a plastoquinol + NADP(+) + n H(+)(out). NDH-1 shuttles electrons from an unknown electron donor, via FMN and iron-sulfur (Fe-S) centers, to quinones in the respiratory and/or the photosynthetic chain. The immediate electron acceptor for the enzyme in this species is believed to be plastoquinone. Couples the redox reaction to proton translocation, and thus conserves the redox energy in a proton gradient. The protein is NAD(P)H-quinone oxidoreductase subunit L, organellar chromatophore of Paulinella chromatophora.